The sequence spans 318 residues: Ethyl acetate hydrolase (318 aa).

Active-site residues include S165, D261, and H291.

Belongs to the 'GDXG' lipolytic enzyme family. Monomer.

The protein resides in the cytoplasm. It carries out the reaction ethyl acetate + H2O = ethanol + acetate + H(+). Inhibited by the serine protease inhibitor phenylmethylsulfonyl fluoride, the histidine reagent diethylpyrocarbonate and two sulfhydryl reagents, mercuric chloride and naphthol AS-D chloroacetate. Not inhibited by EDTA. In terms of biological role, esterase that catalyzes the hydrolysis of ethyl acetate. Can also use propyl acetate and the chromogenic substrates alpha-naphthyl acetate, alpha-naphthyl propionate, alpha-naphthyl caproate and 4-nitrophenyl acetate, with a preference for short-chain aliphatic esters. Highest activity is obtained in vitro with propyl acetate, followed by ethyl acetate. In vivo, could be involved in pyoverdine biosynthesis, but its specific role and its in vivo substrate have not been identified. This is Ethyl acetate hydrolase from Pseudomonas putida (Arthrobacter siderocapsulatus).